A 338-amino-acid polypeptide reads, in one-letter code: Glyceraldehyde-3-phosphate dehydrogenase (338 aa).

NAD(+)-binding positions include R13–I14, D35, and R80. Residues S151–T153, T182, T211–G212, and R234 each bind D-glyceraldehyde 3-phosphate. C152 (nucleophile) is an active-site residue. NAD(+) is bound at residue N316.

This sequence belongs to the glyceraldehyde-3-phosphate dehydrogenase family. As to quaternary structure, homotetramer.

The protein localises to the cytoplasm. It catalyses the reaction D-glyceraldehyde 3-phosphate + phosphate + NAD(+) = (2R)-3-phospho-glyceroyl phosphate + NADH + H(+). Its pathway is carbohydrate degradation; glycolysis; pyruvate from D-glyceraldehyde 3-phosphate: step 1/5. The sequence is that of Glyceraldehyde-3-phosphate dehydrogenase (GPDA) from Colletotrichum gloeosporioides (Anthracnose fungus).